Here is a 964-residue protein sequence, read N- to C-terminus: Siderophore exporter MmpL5 (964 aa).

12 helical membrane passes run 31-51 (FAVP…VTVP), 203-223 (SLQV…LLVY), 230-250 (AIML…VAFL), 255-275 (IIGL…AAAT), 302-322 (MFGG…GATF), 340-360 (AIGM…IIAV), 389-409 (WPGP…LTLP), 773-793 (TYDL…IMLI), 803-823 (VIVG…VLIW), 826-846 (ILGI…LLAV), 880-900 (VVTA…VSEL), and 923-943 (SFMT…PQVV).

Belongs to the resistance-nodulation-cell division (RND) (TC 2.A.6) family. MmpL subfamily. In terms of assembly, interacts with MmpS5.

It is found in the cell inner membrane. Functionally, part of an export system, which is required for biosynthesis and secretion of siderophores. The protein is Siderophore exporter MmpL5 (mmpL5) of Mycobacterium tuberculosis (strain CDC 1551 / Oshkosh).